Reading from the N-terminus, the 318-residue chain is Oxygen-evolving enhancer protein 1, chloroplastic (318 aa).

An N-terminal signal peptide occupies residues 1 to 18 (MKAVIAVFITLMLTAVVA). Residues 45–65 (AAAAALAALTTLSVISPSFAI) traverse the membrane as a helical segment.

Belongs to the PsbO family.

It is found in the plastid. The protein resides in the chloroplast thylakoid membrane. In terms of biological role, stabilizes the manganese cluster which is the primary site of water splitting. This is Oxygen-evolving enhancer protein 1, chloroplastic from Chattonella marina var. antiqua (Red tide flagellate).